The chain runs to 702 residues: Epsin-1 (702 aa).

One can recognise an ENTH domain in the interval 10–142; it reads NFSKGYTDTQ…EDEHALKEAR (133 aa). 2 stretches are compositionally biased toward basic and acidic residues: residues 136–160 and 183–192; these read HALK…SSRF and SRYDDDDRDH. The interval 136 to 285 is disordered; the sequence is HALKEARGDS…HQREREQQEQ (150 aa). Residues 193 to 214 are compositionally biased toward basic residues; sequence RSRRRSRSRRPGRSRSRRRSRR. A phosphoserine mark is found at serine 212, serine 216, serine 218, and serine 223. 2 consecutive UIM domains span residues 226–245 and 254–273; these read ENDP…AEED and DSEA…DEAR. Over residues 230–248 the composition is skewed to basic and acidic residues; the sequence is ELQRVIEESKRQAEEDAKR. Position 255 is a phosphoserine (serine 255). The span at 266 to 283 shows a compositional bias: basic and acidic residues; that stretch reads SKEEDEARQRHQREREQQ. Residue threonine 406 is modified to Phosphothreonine. 2 disordered regions span residues 504 to 589 and 683 to 702; these read NHTG…RTGD and PMQG…LIDL. Polar residues predominate over residues 514–534; sequence TGLQRQTTGYTGNNNPYSRPL. A compositionally biased stretch (low complexity) spans 535-549; that stretch reads QSQSTGILQQQQQQS. Over residues 557–577 the composition is skewed to polar residues; the sequence is KTGSNNPFAQFSNLPSQSTAP. Positions 683 to 695 are enriched in low complexity; it reads PMQGMQQQSMQPQ.

The protein belongs to the epsin family.

The protein localises to the cytoplasm. It localises to the membrane. Binds to membranes enriched in phosphatidylinositol 3,5-bisphosphate (PtdIns(3,5)P2) and phosphatidylinositol 4,5-bisphosphate (PtdIns(4,5)P2). Required for endocytosis and localization of actin. The polypeptide is Epsin-1 (ent1) (Schizosaccharomyces pombe (strain 972 / ATCC 24843) (Fission yeast)).